The following is a 298-amino-acid chain: MAAITASMVAELRAKTDAPMMECKKALTEADGDLAKAEELLRVKLGTKAGKAAARITAEGVVASFIEGTTGALIEVNSETDFVSKNDSFIALAKAAAELVAKHNPADVEALGALPYSQESFGPTLEEVRKGLIGKIGENMSFRRFKRFSGSKLASYLHGTRIGVVVEFDGDETAAKDVAMHIAAMKPVALTSADVPAELIEKERTVAAAKAAESGKPADIAAKMVEGSVQKYLKEVSLFDQVFVKAADGKQTVGQMLKAANTTVKGFTLYVVGEGIEKKVDDFAAEVAAQVAAAKAAA.

The segment at 80 to 83 is involved in Mg(2+) ion dislocation from EF-Tu; sequence TDFV.

Belongs to the EF-Ts family.

It localises to the cytoplasm. Functionally, associates with the EF-Tu.GDP complex and induces the exchange of GDP to GTP. It remains bound to the aminoacyl-tRNA.EF-Tu.GTP complex up to the GTP hydrolysis stage on the ribosome. This is Elongation factor Ts from Paracidovorax citrulli (strain AAC00-1) (Acidovorax citrulli).